Here is a 208-residue protein sequence, read N- to C-terminus: Ribosomal RNA large subunit methyltransferase E (208 aa).

5 residues coordinate S-adenosyl-L-methionine: Gly-62, Trp-64, Asp-82, Asp-98, and Asp-123. Lys-163 serves as the catalytic Proton acceptor.

Belongs to the class I-like SAM-binding methyltransferase superfamily. RNA methyltransferase RlmE family.

The protein localises to the cytoplasm. It carries out the reaction uridine(2552) in 23S rRNA + S-adenosyl-L-methionine = 2'-O-methyluridine(2552) in 23S rRNA + S-adenosyl-L-homocysteine + H(+). Specifically methylates the uridine in position 2552 of 23S rRNA at the 2'-O position of the ribose in the fully assembled 50S ribosomal subunit. The polypeptide is Ribosomal RNA large subunit methyltransferase E (Actinobacillus pleuropneumoniae serotype 5b (strain L20)).